Consider the following 440-residue polypeptide: MDQLAHHYRAHIAELNRRVAEILSREALSGLVIHSGQPHRMFLDDINYPFKANPHFKAWLPVLDNPNCWLVVNGRDKPQLIFYRPVDFWHKVSDVPDMFWTEYFDIKLLTKADKVAEFLPTDIANWAYLGEHLDVAEVLGFTSRNPDAVMSYLHYHRTTKTEYELECMRRANQIAVQGHLAAKNAFYNGASEFEIQQHYLSAVGQSENEVPYGNIIALNQNAAILHYTALEHQSPAKRLSFLIDAGASYFGYASDITRTYAFEKNRFDELITAMNKAQLELIDMMRPGVRYPDLHLATHAKVAQMLLDFDLATGDAQGLVDQGITSAFFPHGLGHMLGLQVHDVGGFSHDERGTHIAAPEAHPFLRCTRILAPNQVLTMEPGLYIIDTLLNELKQDSRGQQINWQTVDELRPFGGIRIEDNVIVHQDRNENMTRELGLTD.

Asp244, Asp255, His335, Glu380, and Glu419 together coordinate Mn(2+).

It belongs to the peptidase M24B family. Bacterial-type prolidase subfamily. It depends on Mn(2+) as a cofactor.

The catalysed reaction is Xaa-L-Pro dipeptide + H2O = an L-alpha-amino acid + L-proline. Functionally, splits dipeptides with a prolyl residue in the C-terminal position. The protein is Xaa-Pro dipeptidase of Shewanella baltica (strain OS185).